A 99-amino-acid polypeptide reads, in one-letter code: uncharacterized protein (99 aa).

The segment at 50–77 (SAHWEDARSSGGTSPIRARAGSEGRGCQ) is disordered.

This is an uncharacterized protein from Homo sapiens (Human).